A 711-amino-acid polypeptide reads, in one-letter code: Amyloid beta precursor protein binding family B member 1 (711 aa).

Serine 135 carries the phosphoserine modification. Disordered regions lie at residues 140–257 (NTQG…SDLP), 277–300 (GTTQ…EESQ), and 321–364 (EPSE…QRNA). Over residues 156 to 174 (EVEEEDEDEEEEDEEEEDL) the composition is skewed to acidic residues. The residue at position 205 (lysine 205) is an N6-acetyllysine. A compositionally biased stretch (polar residues) spans 224-235 (SWATLSQGSPSY). Residues 254–286 (SDLPAGWMRVQDTSGTYYWHIPTGTTQWEPPGR) enclose the WW domain. Positions 288-300 (SPSQGNSPQEESQ) are enriched in polar residues. PID domains are found at residues 365 to 533 (NPGI…QVEF) and 538 to 700 (NELV…LWGS). Serine 460 carries the post-translational modification Phosphoserine; by PKC. Serine 518 carries the phosphoserine modification. Tyrosine 548 carries the post-translational modification Phosphotyrosine; by ABL1. Serine 611 carries the phosphoserine; by SGK1 modification. Residue lysine 702 is modified to N6-acetyllysine.

As to quaternary structure, component of a complex, at least composed of APBB1, RASD1/DEXRAS1 and APP. Interacts (via PID domain 2) with APP (with the intracellular domain of the amyloid-beta precursor protein). Interacts (via PID domain 2) with RASD1/DEXRAS1; impairs the transcription activation activity. Interacts (via PID domain 1) with KAT5/TIP60. Interacts (via the WW domain) with the proline-rich region of APBB1IP. Interacts with TSHZ1 and TSHZ2. Interacts (via the WW domain) with histone H2AX (when phosphorylated on 'Tyr-142') and the proline-rich region of ENAH. Interacts with MAPK8. Interacts (via PID domain 1) with TSHZ3 (via homeobox domain). Interacts with SET. Found in a trimeric complex with HDAC1 and TSHZ3; the interaction between HDAC1 and APBB1 is mediated by TSHZ3. Interacts (via WWW domain) with NEK6. Interacts (via WWW domain) with ABL1. Interacts with RNF157. Interacts with ARF6. Post-translationally, polyubiquitination by RNF157 leads to degradation by the proteasome. In terms of processing, phosphorylation at Ser-611 by SGK1 promotes its localization to the nucleus. Phosphorylated following nuclear translocation. Phosphorylation at Tyr-547 by ABL1 enhances transcriptional activation activity and reduces the affinity for RASD1/DEXRAS1. Phosphorylated at Ser-460 by PKC upon insulin activation. Acetylation at Lys-205 and Lys-702 by KAT5 promotes its transcription activator activity. Brain, not in liver, very low in other tissues. The long (neuron-specific) form is expressed only in brain.

Its subcellular location is the cell membrane. The protein resides in the cytoplasm. The protein localises to the nucleus. It localises to the cell projection. It is found in the growth cone. Its subcellular location is the nucleus speckle. In terms of biological role, transcription coregulator that can have both coactivator and corepressor functions. Adapter protein that forms a transcriptionally active complex with the gamma-secretase-derived amyloid precursor protein (APP) intracellular domain. Plays a central role in the response to DNA damage by translocating to the nucleus and inducing apoptosis. May act by specifically recognizing and binding histone H2AX phosphorylated on 'Tyr-142' (H2AXY142ph) at double-strand breaks (DSBs), recruiting other pro-apoptosis factors such as MAPK8/JNK1. Required for histone H4 acetylation at double-strand breaks (DSBs). Its ability to specifically bind modified histones and chromatin modifying enzymes such as KAT5/TIP60, probably explains its transcription activation activity. Functions in association with TSHZ3, SET and HDAC factors as a transcriptional repressor, that inhibits the expression of CASP4. Associates with chromatin in a region surrounding the CASP4 transcriptional start site(s). Involved in hippocampal neurite branching and neuromuscular junction formation, as a result plays a role in spatial memory functioning. Plays a role in the maintenance of lens transparency. May play a role in muscle cell strength. Acts as a molecular adapter that functions in neurite outgrowth by activating the RAC1-ARF6 axis upon insulin treatment. In Rattus norvegicus (Rat), this protein is Amyloid beta precursor protein binding family B member 1.